Here is a 147-residue protein sequence, read N- to C-terminus: Large ribosomal subunit protein uL15 (147 aa).

Positions 1 to 13 (MELHSLKAAEGSR) are enriched in basic and acidic residues. Positions 1–57 (MELHSLKAAEGSRKVRNRVGRGTSSGNGKTSGRGQKGQKSRSGGGVRPGFEGGQTEL) are disordered. Composition is skewed to gly residues over residues 23 to 35 (TSSG…GRGQ) and 42 to 52 (SGGGVRPGFEG).

Belongs to the universal ribosomal protein uL15 family. In terms of assembly, part of the 50S ribosomal subunit.

In terms of biological role, binds to the 23S rRNA. This Lactococcus lactis subsp. lactis (strain IL1403) (Streptococcus lactis) protein is Large ribosomal subunit protein uL15.